Reading from the N-terminus, the 419-residue chain is Ubiquitin receptor RAD23c (419 aa).

A Ubiquitin-like domain is found at 1–79 (MKIFVKTLKG…IVIMMNKSKP (79 aa)). Low complexity predominate over residues 83–118 (AASSASAGTSQAKSIPPSTSQPSISPQTPASVSAPV). The disordered stretch occupies residues 83-172 (AASSASAGTS…DSAPVGSQGD (90 aa)). Pro residues predominate over residues 119-135 (APAPTRPPPPAPTPTPA). The span at 136–146 (PVAATETVTTP) shows a compositional bias: low complexity. One can recognise a UBA 1 domain in the interval 185–228 (SNLESTIQQILDMGGGTWDRETVVLALRAAFNNPERAVEYLYTG). Residues 235-282 (VPPVARPPASAGQPANPPAQTQQPAAAPASGPNANPLDLFPQGLPNVG) are disordered. A compositionally biased stretch (low complexity) spans 245–270 (AGQPANPPAQTQQPAAAPASGPNANP). Residues 288-331 (GTLDFLRNSQQFQALRAMVQANPQVLQPMLQELGKQNPNLMRLI) enclose the STI1 domain. The UBA 2 domain maps to 372 to 413 (THEEREAIERLEAMGFERALVLEVFFACNKNEELAANYLLDH).

Belongs to the RAD23 family. In terms of assembly, interacts with 'Lys-48'-linked polyubiquitin chains via its both UBA domains. Interacts with RPN10 via its ubiquitin-like domain. As to expression, widely expressed in the whole plant.

It is found in the nucleus. Its subcellular location is the cytoplasm. Functionally, may be involved in nucleotide excision repair. Binds and presumably selects ubiquitin-conjugates for destruction. Prefers multiubiquitin chains rather than single ubiquitins, with a binding affinity for 'Lys-48'-linked ubiquitin chains. Acts as a ubiquitin receptor that associates with the 26S proteasomal docking subunit RPN10 for the indirect recognition of ubiquitinated substrates of ubiquitin/26S proteasome-mediated proteolysis (UPP). Involved in UV tolerance in hypocotyls, specifically in dark conditions. The protein is Ubiquitin receptor RAD23c of Arabidopsis thaliana (Mouse-ear cress).